The sequence spans 208 residues: Holliday junction branch migration complex subunit RuvA (208 aa).

The tract at residues 1–63 is domain I; the sequence is MIAFVSGPVA…EDSLTLYGFA (63 aa). Positions 64–142 are domain II; it reads NDDERQVFEL…EPVGAHIGQQ (79 aa). The segment at 143–147 is flexible linker; the sequence is GIGTP. The segment at 148–208 is domain III; that stretch reads VTSGWRDQLQ…AALQTLNRAR (61 aa).

It belongs to the RuvA family. As to quaternary structure, homotetramer. Forms an RuvA(8)-RuvB(12)-Holliday junction (HJ) complex. HJ DNA is sandwiched between 2 RuvA tetramers; dsDNA enters through RuvA and exits via RuvB. An RuvB hexamer assembles on each DNA strand where it exits the tetramer. Each RuvB hexamer is contacted by two RuvA subunits (via domain III) on 2 adjacent RuvB subunits; this complex drives branch migration. In the full resolvosome a probable DNA-RuvA(4)-RuvB(12)-RuvC(2) complex forms which resolves the HJ.

The protein resides in the cytoplasm. The RuvA-RuvB-RuvC complex processes Holliday junction (HJ) DNA during genetic recombination and DNA repair, while the RuvA-RuvB complex plays an important role in the rescue of blocked DNA replication forks via replication fork reversal (RFR). RuvA specifically binds to HJ cruciform DNA, conferring on it an open structure. The RuvB hexamer acts as an ATP-dependent pump, pulling dsDNA into and through the RuvAB complex. HJ branch migration allows RuvC to scan DNA until it finds its consensus sequence, where it cleaves and resolves the cruciform DNA. In Streptomyces griseus subsp. griseus (strain JCM 4626 / CBS 651.72 / NBRC 13350 / KCC S-0626 / ISP 5235), this protein is Holliday junction branch migration complex subunit RuvA.